A 635-amino-acid chain; its full sequence is MERWSINDSAKIYNLNNWGGDLFSINKKGNICVHPSPNSKYSIELASLVDDLIKRKIKPPILLRFMNILEGRIASINRVFRNAIQTNNYPAQYQTFYPIKVNQQRQVVEAIANFGKKYNIGLEVGSKPELVAAISISTNNSLPIICNGYKDTEFIETVLYATKIGYNITIVIEKLFELEKVIELSRKTGITPKLGIRVKLSSKGTGKWATSGGEDAKFGLRISEIITAIDLLKQYNLIDSVKLLHSHIGSQVTKIDKIKNALIEGARIYVEMKKLGVNLEYIDIGGGLGVDYDGSKSSYFSSVNYSVEEYANDVIYQIKNICDEAGVDCPNIISESGRATVAHYSVMVTNILNTNTQNQMPDFESILTQAEPLSPTVRKLVDIYKSIDRHSLREDYHDTLQLIQEAVSLFNLGYLNLNDRAMAEWLYTRIIKKINNLVEKMKPVPEELQNFKLSMRQTYFANFSLFQSIPDSWAIDQLFPIMPIQRLGEKPDVIASIADITCDSDGEITSFVGENGRTKYLPLHKIRKNEEYYIGFFLIGAYQEILGDLHNLFGDTNAVHITFNKKTNYRIDTVISGDAIQQSLKYVQYDGNEILKKVRDSLENGVASKKISIEESSHFLELLDKTIQAYTYLGE.

Lys-100 is subject to N6-(pyridoxal phosphate)lysine. Residue 282 to 292 participates in substrate binding; that stretch reads IDIGGGLGVDY.

This sequence belongs to the Orn/Lys/Arg decarboxylase class-II family. SpeA subfamily. Mg(2+) is required as a cofactor. It depends on pyridoxal 5'-phosphate as a cofactor.

It catalyses the reaction L-arginine + H(+) = agmatine + CO2. The protein operates within amine and polyamine biosynthesis; agmatine biosynthesis; agmatine from L-arginine: step 1/1. In terms of biological role, catalyzes the biosynthesis of agmatine from arginine. The chain is Biosynthetic arginine decarboxylase from Pelobacter propionicus (strain DSM 2379 / NBRC 103807 / OttBd1).